Here is an 877-residue protein sequence, read N- to C-terminus: Probable linoleate 9S-lipoxygenase 4 (877 aa).

One can recognise a PLAT domain in the interval 38–165; sequence GDFHASLLDG…NYQYERVFFA (128 aa). Residues 168 to 877 form the Lipoxygenase domain; that stretch reads TYLPSKMPAP…AMGIPNSISI (710 aa). A disordered region spans residues 229 to 252; sequence GSQELPYPRRGRTGRAPTKTDPNT. Fe cation is bound by residues His-528, His-533, His-719, Asn-723, and Ile-877.

This sequence belongs to the lipoxygenase family. Requires Fe cation as cofactor.

It catalyses the reaction (9Z,12Z)-octadecadienoate + O2 = (9S)-hydroperoxy-(10E,12Z)-octadecadienoate. It participates in lipid metabolism; oxylipin biosynthesis. Plant lipoxygenase may be involved in a number of diverse aspects of plant physiology including growth and development, pest resistance, and senescence or responses to wounding. Catalyzes the hydroperoxidation of lipids containing a cis,cis-1,4-pentadiene structure. The protein is Probable linoleate 9S-lipoxygenase 4 of Oryza sativa subsp. japonica (Rice).